The sequence spans 816 residues: uncharacterized protein (816 aa).

Disordered regions lie at residues Met1 to Asn81 and Leu391 to Phe411. Residues Glu28–Trp44 show a composition bias toward low complexity. The segment covering Gln64 to Asn81 has biased composition (polar residues). Phosphoserine is present on residues Ser76 and Ser79. Low complexity predominate over residues Leu391–Asn400.

This is an uncharacterized protein from Saccharomyces cerevisiae (strain ATCC 204508 / S288c) (Baker's yeast).